Reading from the N-terminus, the 129-residue chain is Small ribosomal subunit protein uS11 (129 aa).

Belongs to the universal ribosomal protein uS11 family. In terms of assembly, part of the 30S ribosomal subunit. Interacts with proteins S7 and S18. Binds to IF-3.

Its function is as follows. Located on the platform of the 30S subunit, it bridges several disparate RNA helices of the 16S rRNA. Forms part of the Shine-Dalgarno cleft in the 70S ribosome. This is Small ribosomal subunit protein uS11 from Hahella chejuensis (strain KCTC 2396).